The primary structure comprises 1006 residues: GATA zinc finger domain-containing protein 7 (1006 aa).

The span at 55-70 (SSSNNFINNHHNNQSS) shows a compositional bias: low complexity. Disordered stretches follow at residues 55–116 (SSSN…APNL), 128–248 (PFQN…DPFY), 381–499 (NAKK…PLST), 528–638 (STSG…SSNS), and 657–800 (YNSN…NYHD). Polar residues predominate over residues 71-86 (DIHSISQSTPNLSTLI). 2 stretches are compositionally biased toward low complexity: residues 87–110 (SSSS…NSSS) and 128–158 (PFQN…CNNS). Over residues 159 to 168 (PVSSSTNYIP) the composition is skewed to polar residues. Residues 169–180 (NNSTSNVVLNSS) are compositionally biased toward low complexity. The segment covering 181–190 (IPTTSPNVLS) has biased composition (polar residues). Composition is skewed to low complexity over residues 205 to 241 (NNNN…NNNN) and 388 to 410 (TNTN…NNNN). Polar residues predominate over residues 411 to 426 (IQQANVNTSPISTSTT). Low complexity-rich tracts occupy residues 427-456 (PNNN…QQAQ) and 468-496 (SITP…GASP). Polar residues predominate over residues 528–539 (STSGMLSTTNPY). A compositionally biased stretch (low complexity) spans 540 to 557 (THHSPNTSSTVSSSVTSP). Residues 558–589 (LINQYGTNPTLTNNHSFYGSLASNQNTGASDG) show a composition bias toward polar residues. 2 stretches are compositionally biased toward low complexity: residues 590-601 (NNNNNNNNNNNN) and 619-638 (SSNP…SSNS). The span at 662–680 (GSGMTTPQSLGHSPSHNDY) shows a compositional bias: polar residues. Composition is skewed to low complexity over residues 681 to 706 (NSNN…NSNN) and 713 to 785 (SNSS…SSNN). The segment at 842–867 (CHNCGTKNTPEWRRGPSGPATLCNAC) adopts a GATA-type zinc-finger fold. Residues 925 to 957 (NNASSSSSSSSSSSSSSSSSSSTSSYSSSSYNI) form a disordered region. Residues 928–954 (SSSSSSSSSSSSSSSSSSSTSSYSSSS) are compositionally biased toward low complexity.

In Dictyostelium discoideum (Social amoeba), this protein is GATA zinc finger domain-containing protein 7 (gtaG).